We begin with the raw amino-acid sequence, 271 residues long: Dirigent protein 17 (271 aa).

Polar residues predominate over residues 1 to 12 (MEDTGSIKQEAQ). The tract at residues 1 to 22 (MEDTGSIKQEAQSHPPGIFEIP) is disordered. Asn255 is a glycosylation site (N-linked (GlcNAc...) asparagine).

Belongs to the plant dirigent protein family. Homodimer.

It is found in the secreted. Its subcellular location is the extracellular space. The protein localises to the apoplast. Dirigent proteins impart stereoselectivity on the phenoxy radical-coupling reaction, yielding optically active lignans from two molecules of coniferyl alcohol in the biosynthesis of lignans, flavonolignans, and alkaloids and thus plays a central role in plant secondary metabolism. This is Dirigent protein 17 (DIR17) from Arabidopsis thaliana (Mouse-ear cress).